The sequence spans 270 residues: UPF0354 protein BC_4690 (270 aa).

Belongs to the UPF0354 family.

The polypeptide is UPF0354 protein BC_4690 (Bacillus cereus (strain ATCC 14579 / DSM 31 / CCUG 7414 / JCM 2152 / NBRC 15305 / NCIMB 9373 / NCTC 2599 / NRRL B-3711)).